A 254-amino-acid chain; its full sequence is Undecaprenyl-diphosphatase 3 (254 aa).

8 helical membrane passes run 8 to 28 (TEFL…LIGF), 33 to 53 (AKVF…VIFW), 74 to 94 (LHII…HSAI), 97 to 117 (VLFG…LMIV), 133 to 153 (ITYK…WPGF), 174 to 194 (AEYT…LDLI), 207 to 227 (LFAT…VSFL), and 233 to 253 (VKLT…YFFI).

It belongs to the UppP family.

The protein resides in the cell membrane. The catalysed reaction is di-trans,octa-cis-undecaprenyl diphosphate + H2O = di-trans,octa-cis-undecaprenyl phosphate + phosphate + H(+). Its function is as follows. Catalyzes the dephosphorylation of undecaprenyl diphosphate (UPP). Confers resistance to bacitracin. The chain is Undecaprenyl-diphosphatase 3 from Bacillus thuringiensis (strain Al Hakam).